The following is a 142-amino-acid chain: MSHLPILLLLLLVSPGLQAAPTQTTSLKATQVNCSNLREEIVTLLNQPPLPSSNFNNLNREDQRILMKPNLRRPNLEAFQKAVKSLQNATAIESSLKDLPLCLPMATNASMQHPIRIKDGDWNDFRMKLKFYLKTLEIKQPQ.

The first 18 residues, 1–18 (MSHLPILLLLLLVSPGLQ), serve as a signal peptide directing secretion. Residues asparagine 33, asparagine 88, and asparagine 108 are each glycosylated (N-linked (GlcNAc...) asparagine). Cysteine 34 and cysteine 102 form a disulfide bridge.

This sequence belongs to the IL-3 family. As to quaternary structure, monomer. As to expression, activated T-cells, mast cells, natural killer cells.

It is found in the secreted. Granulocyte/macrophage colony-stimulating factors are cytokines that act in hematopoiesis by controlling the production, differentiation, and function of 2 related white cell populations of the blood, the granulocytes and the monocytes-macrophages. Functionally, this CSF induces granulocytes, macrophages, mast cells, stem cells, erythroid cells, eosinophils and megakaryocytes. This chain is Interleukin-3 (IL3), found in Saguinus oedipus (Cotton-top tamarin).